The following is a 182-amino-acid chain: Succinate dehydrogenase [ubiquinone] cytochrome b small subunit, mitochondrial (182 aa).

The Mitochondrial matrix portion of the chain corresponds to 1-71 (MSLSLLLRGA…SAPRMASAGS (71 aa)). Residues 72 to 96 (SHTLLWTVERIVSAGLLAVIPAAFI) form a helical membrane-spanning segment. Residues 97–101 (APSQV) are Mitochondrial intermembrane-facing. A helical transmembrane segment spans residues 102–122 (LDALMAISVVIHTHWGVEAMV). His-113 provides a ligand contact to heme. Over 123-135 (VDYMRPSVVGNVL) the chain is Mitochondrial matrix. Tyr-125 contacts a ubiquinone. The chain crosses the membrane as a helical span at residues 136 to 157 (PKVAHIALIIISVATLGGLFYF). Topologically, residues 158-182 (IQNDVGLANGIKRFWAIKGKDAEKA) are mitochondrial intermembrane.

It belongs to the CybS family. As to quaternary structure, forms part of complex II containing four subunits: a flavoprotein (FP), an iron-sulfur protein (IP) and a cytochrome b composed of a large and a small subunit.

Its subcellular location is the mitochondrion inner membrane. It functions in the pathway carbohydrate metabolism; tricarboxylic acid cycle. Membrane-anchoring subunit of succinate dehydrogenase (SDH) that is involved in complex II of the mitochondrial electron transport chain and is responsible for transferring electrons from succinate to ubiquinone (coenzyme Q). The polypeptide is Succinate dehydrogenase [ubiquinone] cytochrome b small subunit, mitochondrial (Drosophila melanogaster (Fruit fly)).